We begin with the raw amino-acid sequence, 358 residues long: Beta-lactamase (358 aa).

Ser60 serves as the catalytic Acyl-ester intermediate. The active-site Proton acceptor is the Tyr146. 311-313 (KTG) is a substrate binding site.

It belongs to the class-C beta-lactamase family.

It is found in the periplasm. It carries out the reaction a beta-lactam + H2O = a substituted beta-amino acid. In terms of biological role, this protein is a serine beta-lactamase with a substrate specificity for cephalosporins. The chain is Beta-lactamase from Pseudomonas fluorescens.